Reading from the N-terminus, the 417-residue chain is Hydrogen cyanide synthase subunit HcnC (417 aa).

The signal sequence occupies residues 1-18; it reads MIKHYDVVIAGGGVIGAS. Residue 7–21 coordinates FAD; it reads VVIAGGGVIGASCAY. A lipid anchor (N-palmitoyl cysteine) is attached at cysteine 19. Residue cysteine 19 is the site of S-diacylglycerol cysteine attachment. Residues 46–66 form a helical membrane-spanning segment; sequence SAGGLWAIGESVGLGCGVIFF.

The protein belongs to the FAD-dependent glycerol-3-phosphate dehydrogenase family. In terms of assembly, heterotrimer of HcnA, HcnB and HcnC.

The protein resides in the cell membrane. The enzyme catalyses glycine + 2 A = hydrogen cyanide + 2 AH2 + CO2. Its function is as follows. A three-component membrane-bound flavoenzyme that catalyzes the formation of hydrogen cyanide, a secondary metabolite, by transfer of electrons to a cyanide-resistant branch of the aerobic respiratory chain. Contributes to suppression of black root rot of tobacco. The sequence is that of Hydrogen cyanide synthase subunit HcnC from Pseudomonas protegens (strain DSM 19095 / LMG 27888 / CFBP 6595 / CHA0).